The chain runs to 337 residues: CMRF35-like molecule 1 (337 aa).

An N-terminal signal peptide occupies residues 1-19 (MHLSLLVPFLFWITGCCTA). An Ig-like V-type domain is found at 20 to 125 (EDPVTGPEEV…LDPMFKVTVN (106 aa)). The Extracellular portion of the chain corresponds to 20 to 193 (EDPVTGPEEV…GVGDGFLDLS (174 aa)). The segment at 39-45 (VQCRYTS) is plays an important role in murine norovirus (MNV) binding. Cystine bridges form between cysteine 41–cysteine 109 and cysteine 55–cysteine 63. A helical transmembrane segment spans residues 194 to 214 (VLLPVISAVLLLLLLVASLFA). Topologically, residues 215 to 337 (WRMVRRQKKA…IRRPLPAAMP (123 aa)) are cytoplasmic. Disordered stretches follow at residues 248–270 (QPRT…GKDH) and 318–337 (LEEE…AAMP). Over residues 252–266 (SPGSSWKKGSSMSSS) the composition is skewed to low complexity.

It belongs to the CD300 family. In terms of assembly, interacts with PTPN6/SHP-1 in a tyrosine phosphorylation dependent manner. Interacts with IL4R. Post-translationally, phosphorylated on tyrosine. As to expression, expressed in myeloid cells. Present on the surface of macrophages (at protein level). Highly expressed by alveolar, splenic macrophages and bone marrow-derived dendritic cells. Expression is increased following aeroallergen challenge in macrophages, mast cells, and eosinophils.

It localises to the cell membrane. In terms of biological role, acts as an inhibitory receptor for myeloid cells and mast cells. Positively regulates the phagocytosis of apoptotic cells (efferocytosis) via phosphatidylserine (PS) recognition; recognizes and binds PS as a ligand which is expressed on the surface of apoptotic cells. Plays an important role in the maintenance of immune homeostasis, by promoting macrophage-mediated efferocytosis and by inhibiting dendritic cell-mediated efferocytosis. Negatively regulates Fc epsilon receptor-dependent mast cell activation and allergic responses via binding to ceramide which acts as a ligand. May act as a coreceptor for interleukin 4 (IL-4). Associates with and regulates IL-4 receptor alpha-mediated responses by augmenting IL-4- and IL-13-induced signaling. Negatively regulates the Toll-like receptor (TLR) signaling mediated by MYD88 and TRIF through activation of PTPN6/SHP-1 and PTPN11/SHP-2. Inhibits osteoclast formation. Induces macrophage cell death upon engagement. Its function is as follows. (Microbial infection) Acts as a functional receptor for murine norovirus (MNV). Mediates binding to the cell surface and is both necessary and sufficient for viral entry and replication. This interaction requires Mg(2+) and Ca(2+) and is enhanced by bile acids. Primary determinant of MNV species tropism and is sufficient to render cells permissive to infection by MNV. Can render nonmurine mammalian cells susceptible to MNV infection. The polypeptide is CMRF35-like molecule 1 (Cd300lf) (Mus musculus (Mouse)).